The chain runs to 1379 residues: DNA-directed RNA polymerase subunit beta (1379 aa).

The protein belongs to the RNA polymerase beta chain family. In terms of assembly, the RNAP catalytic core consists of 2 alpha, 1 beta, 1 beta' and 1 omega subunit. When a sigma factor is associated with the core the holoenzyme is formed, which can initiate transcription.

It catalyses the reaction RNA(n) + a ribonucleoside 5'-triphosphate = RNA(n+1) + diphosphate. In terms of biological role, DNA-dependent RNA polymerase catalyzes the transcription of DNA into RNA using the four ribonucleoside triphosphates as substrates. This Allorhizobium ampelinum (strain ATCC BAA-846 / DSM 112012 / S4) (Agrobacterium vitis (strain S4)) protein is DNA-directed RNA polymerase subunit beta.